Reading from the N-terminus, the 207-residue chain is MVFYFTSAVVSPPHTIYMGKDKYENEDLIKYGWPEDIWFHVDKLSSAHVYLRMPKGTTIDDIPKEVLIDCVQLVKNNSIQGCKMNNINIVYTPWSNLKKTADMDIGQIGFHRQKEVKIVAVEKKINEIVNRLEKTKEERYPDLAAEKESRDREERNEKKAQIQEQKKKEKEEVKKKKEMEDLKNYTSLMKSDNMTTNEDGYDSDDFM.

Residues 1–104 (MVFYFTSAVV…SNLKKTADMD (104 aa)) are Extracellular-facing. The tract at residues 20-24 (KDKYE) is DNA-binding. Residues 105–121 (IGQIGFHRQKEVKIVAV) traverse the membrane as a helical segment. A coiled-coil region spans residues 112-189 (RQKEVKIVAV…EDLKNYTSLM (78 aa)). Over 122–207 (EKKINEIVNR…EDGYDSDDFM (86 aa)) the chain is Cytoplasmic. A compositionally biased stretch (basic and acidic residues) spans 140 to 183 (YPDLAAEKESRDREERNEKKAQIQEQKKKEKEEVKKKKEMEDLK). A disordered region spans residues 140–207 (YPDLAAEKES…EDGYDSDDFM (68 aa)). Polar residues predominate over residues 184–198 (NYTSLMKSDNMTTNE). Ser203 is modified (phosphoserine).

This sequence belongs to the CCDC25 family. As to quaternary structure, interacts (via cytoplasmic region) with ILK.

It localises to the cell membrane. The protein resides in the endomembrane system. Transmembrane receptor that senses neutrophil extracellular traps (NETs) and triggers the ILK-PARVB pathway to enhance cell motility. NETs are mainly composed of DNA fibers and are released by neutrophils to bind pathogens during inflammation. Specifically binds NETs on its extracellular region, in particular the 8-OHdG-enriched DNA present in NETs, and recruits ILK, initiating the ILK-PARVB cascade to induce cytoskeleton rearrangement and directional migration of cells. This Danio rerio (Zebrafish) protein is Coiled-coil domain-containing protein 25.